Reading from the N-terminus, the 59-residue chain is Protein SspF (59 aa).

This sequence belongs to the alpha/beta-type SASP family.

May play some important role in either sporulation or the dormant spore. The chain is Protein SspF (sspF) from Bacillus cereus (strain ATCC 14579 / DSM 31 / CCUG 7414 / JCM 2152 / NBRC 15305 / NCIMB 9373 / NCTC 2599 / NRRL B-3711).